The sequence spans 602 residues: Cytokine-like nuclear factor N-PAC (602 aa).

2 positions are modified to phosphoserine: serine 8 and serine 10. Residues 22 to 81 (PKDLIWAKMKGFTPWPGMIVDPPLDLLSQQRRANTKCVFFFGSRNFAWIEENNIKPFEGP) enclose the PWWP domain. The tract at residues 162–262 (GSPDEGDGLD…ASSTPTGRRR (101 aa)) is disordered. 3 stretches are compositionally biased toward polar residues: residues 176 to 188 (ADSS…SPAV), 204 to 217 (AATS…SAKS), and 224 to 233 (SAQQSPSGPS). A phosphoserine mark is found at serine 224, serine 228, and serine 243. Residues 309-602 (RDIVPSEQTF…SSAVFVRSRF (294 aa)) are dehydrogenase domain. NAD(+)-binding positions include 319–333 (GFLG…IVKD), threonine 411, and arginine 554.

This sequence belongs to the HIBADH-related family. NP60 subfamily. In terms of assembly, binds to mononucleosomes. Interacts with male-specific lethal (MSL) histone acetyltransferase complex at least composed of mof, msl-1, msl-2 and msl-3.

The protein resides in the chromosome. In terms of biological role, nucleosome-destabilizing factor that is recruited to genes during transcriptional activation and colocalizes with a subset of trimethylated 'Lys-36' histone H3 (H3K36me3)-enriched regions. Binds DNA (in vitro). Facilitates Pol II transcription through nucleosomes. Facilitates male-specific lethal (MSL) histone acetyltransferase complex targeting to active genes on the X chromosome. Stimulates the acetylation of 'Lys-56' of nucleosomal histone H3 (H3K56ac) by nej. May have oxidoreductase activity. This Drosophila melanogaster (Fruit fly) protein is Cytokine-like nuclear factor N-PAC.